The primary structure comprises 621 residues: 1-deoxy-D-xylulose-5-phosphate synthase (621 aa).

Thiamine diphosphate is bound by residues His80 and 121 to 123 (GHS). Asp152 contacts Mg(2+). Residues 153 to 154 (GA), Asn181, Tyr288, and Glu370 contribute to the thiamine diphosphate site. Asn181 lines the Mg(2+) pocket.

This sequence belongs to the transketolase family. DXPS subfamily. As to quaternary structure, homodimer. Mg(2+) is required as a cofactor. It depends on thiamine diphosphate as a cofactor.

The enzyme catalyses D-glyceraldehyde 3-phosphate + pyruvate + H(+) = 1-deoxy-D-xylulose 5-phosphate + CO2. The protein operates within metabolic intermediate biosynthesis; 1-deoxy-D-xylulose 5-phosphate biosynthesis; 1-deoxy-D-xylulose 5-phosphate from D-glyceraldehyde 3-phosphate and pyruvate: step 1/1. In terms of biological role, catalyzes the acyloin condensation reaction between C atoms 2 and 3 of pyruvate and glyceraldehyde 3-phosphate to yield 1-deoxy-D-xylulose-5-phosphate (DXP). This Shewanella frigidimarina (strain NCIMB 400) protein is 1-deoxy-D-xylulose-5-phosphate synthase.